The chain runs to 365 residues: Snurportin-1 (365 aa).

The IBB domain occupies Gly10–Val72. 2 disordered regions span residues Ala15 to Gly34 and Trp69 to Val90. Acidic residues predominate over residues Glu73–Val90. The segment at Gly129 to Arg131 is interaction with m3G-cap structure. The tract at residues Leu211–Ala333 is necessary for binding to the m3G-cap structure. Residues Arg317–Asn365 form a disordered region. Polar residues predominate over residues Ser345–Gly355.

The protein belongs to the snurportin family.

It localises to the nucleus. The protein resides in the cytoplasm. Functions as an U snRNP-specific nuclear import adapter. Involved in the trimethylguanosine (m3G)-cap-dependent nuclear import of U snRNPs. Binds specifically to the terminal m3G-cap U snRNAs. In Gallus gallus (Chicken), this protein is Snurportin-1 (SNUPN).